Here is a 557-residue protein sequence, read N- to C-terminus: Urease subunit alpha (557 aa).

Residues 130-557 enclose the Urease domain; it reads GFIDTHIHWV…LPLTQLYFIY (428 aa). Residues His-135, His-137, and Lys-217 each coordinate Ni(2+). Lys-217 is modified (N6-carboxylysine). His-219 provides a ligand contact to substrate. Positions 246 and 272 each coordinate Ni(2+). His-320 serves as the catalytic Proton donor. Residue Asp-360 participates in Ni(2+) binding.

The protein belongs to the metallo-dependent hydrolases superfamily. Urease alpha subunit family. In terms of assembly, heterohexamer of 3 UreC (alpha) and 3 UreAB (gamma/beta) subunits. Ni cation serves as cofactor. In terms of processing, carboxylation allows a single lysine to coordinate two nickel ions.

The protein resides in the cytoplasm. It catalyses the reaction urea + 2 H2O + H(+) = hydrogencarbonate + 2 NH4(+). It participates in nitrogen metabolism; urea degradation; CO(2) and NH(3) from urea (urease route): step 1/1. In Sulfurisphaera tokodaii (strain DSM 16993 / JCM 10545 / NBRC 100140 / 7) (Sulfolobus tokodaii), this protein is Urease subunit alpha.